The chain runs to 117 residues: Large ribosomal subunit protein bL20c (117 aa).

Belongs to the bacterial ribosomal protein bL20 family.

It localises to the plastid. It is found in the chloroplast. Functionally, binds directly to 23S ribosomal RNA and is necessary for the in vitro assembly process of the 50S ribosomal subunit. It is not involved in the protein synthesizing functions of that subunit. This chain is Large ribosomal subunit protein bL20c, found in Lobularia maritima (Sweet alyssum).